The following is a 153-amino-acid chain: UPAR/Ly6 domain-containing protein cold (153 aa).

Residues 1–25 (MKSWEIAVVLVAAVYLCSQVNFVAG) form the signal peptide. Over 26 to 130 (LECYVCSNQT…FVISGAPSRQ (105 aa)) the chain is Extracellular. Cystine bridges form between cysteine 28–cysteine 55, cysteine 31–cysteine 41, cysteine 48–cysteine 81, cysteine 87–cysteine 112, cysteine 99–cysteine 109, and cysteine 113–cysteine 118. Residue asparagine 33 is glycosylated (N-linked (GlcNAc...) asparagine). Serine 124 is lipidated: GPI-anchor amidated serine. A propeptide spans 125 to 153 (GAPSRQGYGVCLTLLTALLGLGSWLIPRS) (removed in mature form). A helical membrane pass occupies residues 131-151 (GYGVCLTLLTALLGLGSWLIP). Over 152 to 153 (RS) the chain is Cytoplasmic.

The protein belongs to the snake toxin-like superfamily. In terms of processing, GPI-anchored. As to expression, expressed in all tissues that form septate junctions, including hindgut, trachea, epidermis and dorsal pouch. Expressed in subperineurial glial cells that form the hemolymph-brain barrier of the central nervous system.

The protein resides in the endosome membrane. It localises to the endoplasmic reticulum membrane. It is found in the cell membrane. Its subcellular location is the cell junction. The protein localises to the septate junction. In terms of biological role, required for septate junction assembly, possibly by organizing the preassembly and transport of septate junction proteins such as dlg1/disks large 1 and Nrx-IV/Neurexin-IV. Involved in paracellular barrier functions of trachea, hindgut and salivary gland mediated by epithelial cell septate junctions. Involved in paracellular barrier functions of the hemolymph-brain barrier (insect blood-brain barrier) mediated by glial cell septate junctions. Required for maintenance of septate junctions in imaginal disk epithelial cells. Involved in the epithelial cell wound-healing response. Directly or indirectly mediates cell-cell adhesion during septate junction formation. This is UPAR/Ly6 domain-containing protein cold from Drosophila melanogaster (Fruit fly).